Reading from the N-terminus, the 245-residue chain is 1-(5-phosphoribosyl)-5-[(5-phosphoribosylamino)methylideneamino] imidazole-4-carboxamide isomerase (245 aa).

Catalysis depends on aspartate 8, which acts as the Proton acceptor. Aspartate 129 (proton donor) is an active-site residue.

This sequence belongs to the HisA/HisF family.

Its subcellular location is the cytoplasm. The catalysed reaction is 1-(5-phospho-beta-D-ribosyl)-5-[(5-phospho-beta-D-ribosylamino)methylideneamino]imidazole-4-carboxamide = 5-[(5-phospho-1-deoxy-D-ribulos-1-ylimino)methylamino]-1-(5-phospho-beta-D-ribosyl)imidazole-4-carboxamide. The protein operates within amino-acid biosynthesis; L-histidine biosynthesis; L-histidine from 5-phospho-alpha-D-ribose 1-diphosphate: step 4/9. The polypeptide is 1-(5-phosphoribosyl)-5-[(5-phosphoribosylamino)methylideneamino] imidazole-4-carboxamide isomerase (Geotalea uraniireducens (strain Rf4) (Geobacter uraniireducens)).